A 227-amino-acid polypeptide reads, in one-letter code: Cleavage and polyadenylation specificity factor subunit 5 (227 aa).

Ser2 bears the N-acetylserine mark. The segment at 2 to 147 is necessary for RNA-binding; the sequence is SVVPPNRSQT…DWVIDDCIGN (146 aa). The residue at position 15 (Arg15) is an Omega-N-methylarginine. Lys23 and Lys29 each carry N6-acetyllysine. Residue Tyr40 is modified to Phosphotyrosine. Lys56 carries the post-translational modification N6-acetyllysine. The region spanning 76 to 201 is the Nudix hydrolase domain; sequence MRRTVEGVLI…KLVAAPLFEL (126 aa). Positions 81-160 are necessary for interactions with PAPOLA and PABPN1; sequence EGVLIVHEHR…PNFEPPQYPY (80 aa). The interval 102–104 is interaction with RNA; it reads TFF. Residues 109-130 carry the Nudix box motif; it reads GELNPGEDEVEGLKRLMTEILG.

It belongs to the Nudix hydrolase family. CPSF5 subfamily. Homodimer (via N- and C-terminus); binds RNA as homodimer. Component of the cleavage factor Im (CFIm) complex which is a heterotetramer composed of two subunits of NUDT21/CPSF5 and two subunits of CPSF6 or CPSF7 or a heterodimer of CPSF6 and CPSF7. The cleavage factor Im (CFIm) complex associates with the CPSF and CSTF complexes to promote the assembly of the core mRNA 3'-processing machinery. Interacts with CPSF6 (via the RRM domain); this interaction is direct and enhances binding to RNA. Interacts with CPSF7. Interacts with FIP1L1; this interaction occurs in a RNA sequence-specific manner. Interacts with PABPN1. Interacts (via N-terminus) with PAPOLA (via C-terminus); this interaction is direct and diminished by acetylation. Interacts with SNRNP70. Interacts with VIRMA. Post-translationally, acetylated mainly by p300/CBP, recruited to the complex by CPSF6. Acetylation decreases interaction with PAPAO. Deacetylated by the class I/II HDACs, HDAC1, HDAC3 and HDAC10, and by the class III HDACs, SIRT1 and SIRT2. Expressed in testis. Expressed in male germ cells (at protein level).

Its subcellular location is the nucleus. The protein resides in the cytoplasm. Functionally, component of the cleavage factor Im (CFIm) complex that functions as an activator of the pre-mRNA 3'-end cleavage and polyadenylation processing required for the maturation of pre-mRNA into functional mRNAs. CFIm contributes to the recruitment of multiprotein complexes on specific sequences on the pre-mRNA 3'-end, so called cleavage and polyadenylation signals (pA signals). Most pre-mRNAs contain multiple pA signals, resulting in alternative cleavage and polyadenylation (APA) producing mRNAs with variable 3'-end formation. The CFIm complex acts as a key regulator of cleavage and polyadenylation site choice during APA through its binding to 5'-UGUA-3' elements localized in the 3'-untranslated region (UTR) for a huge number of pre-mRNAs. NUDT21/CPSF5 activates indirectly the mRNA 3'-processing machinery by recruiting CPSF6 and/or CPSF7. Binds to 5'-UGUA-3' elements localized upstream of pA signals that act as enhancers of pre-mRNA 3'-end processing. The homodimer mediates simultaneous sequence-specific recognition of two 5'-UGUA-3' elements within the pre-mRNA. Plays a role in somatic cell fate transitions and pluripotency by regulating widespread changes in gene expression through an APA-dependent function. Binds to chromatin. Binds to, but does not hydrolyze mono- and di-adenosine nucleotides. This is Cleavage and polyadenylation specificity factor subunit 5 from Mus musculus (Mouse).